A 293-amino-acid chain; its full sequence is MAVSLNDIKNKIASTKNTSQITNAMQMVSAAKLGKSEEAAKNFQVYAQKVRKLVTDMLHGHEAENARHHSMLISRPVKKSAYIVITSDRGLVGGYNATILKALMELKAEYHPTGEDFEVICIGSVGADFFRARGIQPVYELRGLADQPSFDEVRKIISKTIEMYQNELFDELYVCYNHHVNSLTSQMRVEQMLPIIDLDPNEADEDYTLNLELESSRDSILDQLLPQFAESMIYGAIIDAKTAENAAGMTAMQTATDNAKKVISDLTIQYNRARQAAITQEITEIVAGASALE.

Belongs to the ATPase gamma chain family. F-type ATPases have 2 components, CF(1) - the catalytic core - and CF(0) - the membrane proton channel. CF(1) has five subunits: alpha(3), beta(3), gamma(1), delta(1), epsilon(1). CF(0) has three main subunits: a, b and c.

It localises to the cell membrane. Produces ATP from ADP in the presence of a proton gradient across the membrane. The gamma chain is believed to be important in regulating ATPase activity and the flow of protons through the CF(0) complex. The polypeptide is ATP synthase gamma chain (Streptococcus sanguinis).